The chain runs to 261 residues: Phosphoribosylaminoimidazole-succinocarboxamide synthase (261 aa).

This sequence belongs to the SAICAR synthetase family.

It carries out the reaction 5-amino-1-(5-phospho-D-ribosyl)imidazole-4-carboxylate + L-aspartate + ATP = (2S)-2-[5-amino-1-(5-phospho-beta-D-ribosyl)imidazole-4-carboxamido]succinate + ADP + phosphate + 2 H(+). The protein operates within purine metabolism; IMP biosynthesis via de novo pathway; 5-amino-1-(5-phospho-D-ribosyl)imidazole-4-carboxamide from 5-amino-1-(5-phospho-D-ribosyl)imidazole-4-carboxylate: step 1/2. This Novosphingobium aromaticivorans (strain ATCC 700278 / DSM 12444 / CCUG 56034 / CIP 105152 / NBRC 16084 / F199) protein is Phosphoribosylaminoimidazole-succinocarboxamide synthase.